Here is a 141-residue protein sequence, read N- to C-terminus: Large ribosomal subunit protein uL11 (141 aa).

This sequence belongs to the universal ribosomal protein uL11 family. In terms of assembly, part of the ribosomal stalk of the 50S ribosomal subunit. Interacts with L10 and the large rRNA to form the base of the stalk. L10 forms an elongated spine to which L12 dimers bind in a sequential fashion forming a multimeric L10(L12)X complex. In terms of processing, one or more lysine residues are methylated.

Its function is as follows. Forms part of the ribosomal stalk which helps the ribosome interact with GTP-bound translation factors. This is Large ribosomal subunit protein uL11 from Nitratiruptor sp. (strain SB155-2).